A 406-amino-acid chain; its full sequence is ESX-5 secretion system protein EccE5 (406 aa).

The next 2 membrane-spanning stretches (helical) occupy residues 9–29 (LALS…ILAV) and 43–63 (VAWW…VVSY).

This sequence belongs to the EccE family. Part of the ESX-5 / type VII secretion system (T7SS), which is composed of cytosolic and membrane components. The ESX-5 membrane complex is composed of EccB5, EccC5, EccD5 and EccE5.

It is found in the cell inner membrane. Functionally, part of the ESX-5 specialized secretion system, which is responsible for the secretion of EsxN and a number of PE_PGRS and PPE proteins, including PPE41. The protein is ESX-5 secretion system protein EccE5 of Mycobacterium tuberculosis (strain ATCC 25618 / H37Rv).